The following is a 67-amino-acid chain: DNA-directed RNA polymerase subunit omega (67 aa).

Belongs to the RNA polymerase subunit omega family. In terms of assembly, the RNAP catalytic core consists of 2 alpha, 1 beta, 1 beta' and 1 omega subunit. When a sigma factor is associated with the core the holoenzyme is formed, which can initiate transcription.

The catalysed reaction is RNA(n) + a ribonucleoside 5'-triphosphate = RNA(n+1) + diphosphate. Promotes RNA polymerase assembly. Latches the N- and C-terminal regions of the beta' subunit thereby facilitating its interaction with the beta and alpha subunits. The sequence is that of DNA-directed RNA polymerase subunit omega from Listeria monocytogenes serotype 4a (strain HCC23).